The primary structure comprises 273 residues: Ribosomal RNA small subunit methyltransferase A (273 aa).

Residues Asn18, Leu20, Gly45, Glu66, Asp91, and Asn113 each coordinate S-adenosyl-L-methionine.

It belongs to the class I-like SAM-binding methyltransferase superfamily. rRNA adenine N(6)-methyltransferase family. RsmA subfamily.

It localises to the cytoplasm. The enzyme catalyses adenosine(1518)/adenosine(1519) in 16S rRNA + 4 S-adenosyl-L-methionine = N(6)-dimethyladenosine(1518)/N(6)-dimethyladenosine(1519) in 16S rRNA + 4 S-adenosyl-L-homocysteine + 4 H(+). Specifically dimethylates two adjacent adenosines (A1518 and A1519) in the loop of a conserved hairpin near the 3'-end of 16S rRNA in the 30S particle. May play a critical role in biogenesis of 30S subunits. This chain is Ribosomal RNA small subunit methyltransferase A, found in Escherichia fergusonii (strain ATCC 35469 / DSM 13698 / CCUG 18766 / IAM 14443 / JCM 21226 / LMG 7866 / NBRC 102419 / NCTC 12128 / CDC 0568-73).